A 144-amino-acid polypeptide reads, in one-letter code: Maximins 3/H9 type 2 (144 aa).

The first 18 residues, 1 to 18 (MNFKYIVAVSFLIASAYA), serve as a signal peptide directing secretion. 2 propeptides span residues 19-43 (RSVQ…REIR) and 74-123 (TAEE…KEKR). An Isoleucine amide modification is found at Ile-143.

This sequence belongs to the bombinin family. As to expression, expressed by the skin glands.

Its subcellular location is the secreted. In terms of biological role, maximin-3 shows antibacterial activity against both Gram-positive and Gram-negative bacteria. It also shows antimicrobial activity against the fungus C.albicans, but not against A.flavus nor P.uticale. It has little hemolytic activity. It possess a significant cytotoxicity against tumor cell lines. It possess a significant anti-HIV activity. It shows high spermicidal activity. Maximin-H9 shows antimicrobial activity against bacteria and against the fungus C.albicans. Shows strong hemolytic activity. The polypeptide is Maximins 3/H9 type 2 (Bombina maxima (Giant fire-bellied toad)).